The sequence spans 636 residues: MAARPAFGIVRQLLRSNARGCSSGAPVTQPRPGEPSRPTREGLSLRLQFLQEHAAPFSAFLTDSFGRQHSYLRISLTEKCNLRCQYCMPEEGVPLTPKADLLTTEEILTLARLFVKEGVDKIRLTGGEPLIRPDVVDIVARLHGLEGLRTIGLTTNGINLARLLPRLQQAGLNAVNISLDTLVPAKFEFIVRRKGFHKVMEGIHKAIELGYKPVKVNCVVMRGLNEDELLDFVALTEGLPLDVRFIEYMPFDGNKWNFKKMVSYKEMLDTIRQRWPGLEKLPEEDSSTAKAFKIPGFQGQISFITSMSEHFCGTCNRLRITADGNLKVCLFGNSEVSLRDHLRAGASEEELLRIIGAAVGRKKRQHAGMFNIAQMKNRPMILIGVLLMLQDSPPARWSNFSWDPLRVRNPSARQCLSDQMASLWKRHCIPKALPLSQQCLGSGSPQRHYSSYPDPDTHSKCLSTGSQAPDAPSGPGPTSNQLTHVDSAGRASMVDVGGKPETERVAVASAMVLLGPVAFKLVQQNQLKKGDALVVAQLAGVQAAKLTSQLIPLCHHVALSHVQVHLELDSTRHAVLIQASCRARGPTGVEMEALTSAAMAALTVYDMCKAVSRDIVVTEVKLISKTGGQRGDFHRA.

The segment at 1 to 383 is molybdenum cofactor biosynthesis protein A; it reads MAARPAFGIV…QMKNRPMILI (383 aa). The interval 19-40 is disordered; sequence RGCSSGAPVTQPRPGEPSRPTR. S64 is modified (phosphoserine). The 216-residue stretch at 64-279 folds into the Radical SAM core domain; it reads SFGRQHSYLR…TIRQRWPGLE (216 aa). R73 is a GTP binding site. [4Fe-4S] cluster-binding residues include C80 and C84. Y86 lines the S-adenosyl-L-methionine pocket. C87 is a [4Fe-4S] cluster binding site. Position 123 (R123) interacts with GTP. Residue G127 participates in S-adenosyl-L-methionine binding. T154 contacts GTP. S178 lines the S-adenosyl-L-methionine pocket. Residue K198 is modified to N6-acetyllysine. K215 is a GTP binding site. S-adenosyl-L-methionine is bound at residue M249. [4Fe-4S] cluster is bound by residues C312 and C315. GTP is bound at residue 317–319; sequence RLR. Position 329 (C329) interacts with [4Fe-4S] cluster. Residues 414–636 form a molybdenum cofactor biosynthesis protein C region; the sequence is QCLSDQMASL…GGQRGDFHRA (223 aa). The disordered stretch occupies residues 444–484; it reads SPQRHYSSYPDPDTHSKCLSTGSQAPDAPSGPGPTSNQLTH. An N6-acetyllysine modification is found at K528. D606 functions as the For molybdenum cofactor biosynthesis protein C activity in the catalytic mechanism.

The protein in the C-terminal section; belongs to the MoaC family. In the N-terminal section; belongs to the radical SAM superfamily. MoaA family. Isoform Mocs1a and isoform Mocs1b probably form a heterooligomer. [4Fe-4S] cluster is required as a cofactor.

It catalyses the reaction GTP + AH2 + S-adenosyl-L-methionine = (8S)-3',8-cyclo-7,8-dihydroguanosine 5'-triphosphate + 5'-deoxyadenosine + L-methionine + A + H(+). The catalysed reaction is (8S)-3',8-cyclo-7,8-dihydroguanosine 5'-triphosphate = cyclic pyranopterin phosphate + diphosphate. Its pathway is cofactor biosynthesis; molybdopterin biosynthesis. Isoform Mocs1a and isoform Mocs1b probably form a complex that catalyzes the conversion of 5'-GTP to cyclic pyranopterin monophosphate (cPMP). Mocs1a catalyzes the cyclization of GTP to (8S)-3',8-cyclo-7,8-dihydroguanosine 5'-triphosphate and Mocs1b catalyzes the subsequent conversion of (8S)-3',8-cyclo-7,8-dihydroguanosine 5'-triphosphate to cPMP. The protein is Molybdenum cofactor biosynthesis protein 1 (Mocs1) of Mus musculus (Mouse).